The following is a 221-amino-acid chain: Chalcone--flavanone isomerase (221 aa).

The substrate site is built by T52, N117, and S193.

It belongs to the chalcone isomerase family. Flowers.

It carries out the reaction a chalcone = a flavanone.. It participates in secondary metabolite biosynthesis; flavonoid biosynthesis. Functionally, catalyzes the intramolecular cyclization of bicyclic chalcones into tricyclic (S)-flavanones. Responsible for the isomerization of 4,2',4',6'-tetrahydroxychalcone (also termed chalcone) into naringenin. The chain is Chalcone--flavanone isomerase (CHI) from Gentiana triflora (Clustered gentian).